Consider the following 84-residue polypeptide: Cell division topological specificity factor (84 aa).

It belongs to the MinE family.

Prevents the cell division inhibition by proteins MinC and MinD at internal division sites while permitting inhibition at polar sites. This ensures cell division at the proper site by restricting the formation of a division septum at the midpoint of the long axis of the cell. This is Cell division topological specificity factor from Paraburkholderia phytofirmans (strain DSM 17436 / LMG 22146 / PsJN) (Burkholderia phytofirmans).